A 252-amino-acid polypeptide reads, in one-letter code: Membrane protein insertase YidC (252 aa).

Residues 1 to 19 (MKKVLWIIIIILMVGALAG) form the signal peptide. Cysteine 20 carries N-palmitoyl cysteine lipidation. Residue cysteine 20 is the site of S-diacylglycerol cysteine attachment. 6 consecutive transmembrane segments (helical) span residues 34–54 (IWNHFFVYPLSWVLISVADLL), 58–78 (FGLSIIVVTIGIRLFLLPLMI), 131–151 (MAGCLPLFIQLPVMMAFYFAI), 162–182 (FLWFDLGSPDPLYILPVVAGI), 201–221 (VIIYIMPVMIVVAGVTLPSAL), and 223–243 (LYWVVGNLFMIIQTYFTVVRF).

Belongs to the OXA1/ALB3/YidC family. Type 2 subfamily.

The protein resides in the cell membrane. In terms of biological role, required for the insertion and/or proper folding and/or complex formation of integral membrane proteins into the membrane. Involved in integration of membrane proteins that insert both dependently and independently of the Sec translocase complex, as well as at least some lipoproteins. The polypeptide is Membrane protein insertase YidC (Alkalihalophilus pseudofirmus (strain ATCC BAA-2126 / JCM 17055 / OF4) (Bacillus pseudofirmus)).